Reading from the N-terminus, the 101-residue chain is Small ribosomal subunit protein uS14 (101 aa).

This sequence belongs to the universal ribosomal protein uS14 family. Part of the 30S ribosomal subunit. Contacts proteins S3 and S10.

In terms of biological role, binds 16S rRNA, required for the assembly of 30S particles and may also be responsible for determining the conformation of the 16S rRNA at the A site. The chain is Small ribosomal subunit protein uS14 from Paraburkholderia phymatum (strain DSM 17167 / CIP 108236 / LMG 21445 / STM815) (Burkholderia phymatum).